A 147-amino-acid chain; its full sequence is Nucleoside diphosphate kinase (147 aa).

Positions 9, 57, 85, 91, 102, and 112 each coordinate ATP. Threonine 91 is modified (phosphothreonine). Histidine 115 functions as the Pros-phosphohistidine intermediate in the catalytic mechanism. Serine 122 carries the post-translational modification Phosphoserine.

This sequence belongs to the NDK family. In terms of assembly, homotetramer. Requires Mg(2+) as cofactor.

The protein resides in the cytoplasm. The enzyme catalyses a 2'-deoxyribonucleoside 5'-diphosphate + ATP = a 2'-deoxyribonucleoside 5'-triphosphate + ADP. It carries out the reaction a ribonucleoside 5'-diphosphate + ATP = a ribonucleoside 5'-triphosphate + ADP. Its function is as follows. Major role in the synthesis of nucleoside triphosphates other than ATP. The ATP gamma phosphate is transferred to the NDP beta phosphate via a ping-pong mechanism, using a phosphorylated active-site intermediate. This is Nucleoside diphosphate kinase from Halalkalibacterium halodurans (strain ATCC BAA-125 / DSM 18197 / FERM 7344 / JCM 9153 / C-125) (Bacillus halodurans).